A 503-amino-acid polypeptide reads, in one-letter code: MLDLTYEAPKPKVIAGAKHDWELVIGMEIHAQVSSNAKLFSGASTTFGAEPNSNVSFVDCAMPGMLPVINEFCVAQAVRTGLGLKAQINLFSAFDRKNYFYPDLPQGYQISQLYHPIVGEGEVLVEMAPGIARLVRIERIHLEQDAGKSIHDMDPNLSFVDFNRTGVALMEIVSRPDIRGPEEAAAYVAKLRQILRYLGTCDGNMQNGNLRADVNVSVCRPGQYEKYQETQDFSHLGTRCEIKNMNSMRFIQQAIDYEARRQIAILEDGGKVVQETRLYDPDKGETRSMRSKEEAHDYRYFPDPDLLPLEIEQGWVDEIAASMPELPDAKKARFMADYGVTDYDANVLTAELEAAAYFEEVARGRDGKQAANWVINELFGRLNKQGLTIADTPVKAGQLGGVLDLIASGEISGKMAKDLFEILWTEGGDPAEVAAARGMKQVTDTGAIETAVDEIIAANPAQVEKAKANPKLAGWFVGQVIKATGGKANPAAVNQIVAEKLGL.

It belongs to the GatB/GatE family. GatB subfamily. In terms of assembly, heterotrimer of A, B and C subunits.

The catalysed reaction is L-glutamyl-tRNA(Gln) + L-glutamine + ATP + H2O = L-glutaminyl-tRNA(Gln) + L-glutamate + ADP + phosphate + H(+). It carries out the reaction L-aspartyl-tRNA(Asn) + L-glutamine + ATP + H2O = L-asparaginyl-tRNA(Asn) + L-glutamate + ADP + phosphate + 2 H(+). Functionally, allows the formation of correctly charged Asn-tRNA(Asn) or Gln-tRNA(Gln) through the transamidation of misacylated Asp-tRNA(Asn) or Glu-tRNA(Gln) in organisms which lack either or both of asparaginyl-tRNA or glutaminyl-tRNA synthetases. The reaction takes place in the presence of glutamine and ATP through an activated phospho-Asp-tRNA(Asn) or phospho-Glu-tRNA(Gln). This is Aspartyl/glutamyl-tRNA(Asn/Gln) amidotransferase subunit B from Cereibacter sphaeroides (strain KD131 / KCTC 12085) (Rhodobacter sphaeroides).